A 379-amino-acid polypeptide reads, in one-letter code: Succinyl-diaminopimelate desuccinylase (379 aa).

H70 contacts Zn(2+). D72 is a catalytic residue. D103 lines the Zn(2+) pocket. E137 (proton acceptor) is an active-site residue. Zn(2+) contacts are provided by E138, E166, and H352.

It belongs to the peptidase M20A family. DapE subfamily. In terms of assembly, homodimer. It depends on Zn(2+) as a cofactor. Requires Co(2+) as cofactor.

The enzyme catalyses N-succinyl-(2S,6S)-2,6-diaminopimelate + H2O = (2S,6S)-2,6-diaminopimelate + succinate. Its pathway is amino-acid biosynthesis; L-lysine biosynthesis via DAP pathway; LL-2,6-diaminopimelate from (S)-tetrahydrodipicolinate (succinylase route): step 3/3. Catalyzes the hydrolysis of N-succinyl-L,L-diaminopimelic acid (SDAP), forming succinate and LL-2,6-diaminopimelate (DAP), an intermediate involved in the bacterial biosynthesis of lysine and meso-diaminopimelic acid, an essential component of bacterial cell walls. This Burkholderia lata (strain ATCC 17760 / DSM 23089 / LMG 22485 / NCIMB 9086 / R18194 / 383) protein is Succinyl-diaminopimelate desuccinylase.